A 348-amino-acid polypeptide reads, in one-letter code: MTSGKNGLTYADAGVDIDAGNELVDRIKPAAKRTNRPGVMSGLGGFGALFDLKAAGYEDPILVGATDGVGTKLRIAIDTGLVDGVGIDLVAMCVNDLVCQGAEPLFFLDYFATGKLETDVAARIIEGIAEGCVRSGCALIGGETAEMPGMYPKGDFDLAGFAVGAMERGTALPAGVSEGDVLLGLASDGVHSNGYSLVRQIVKYSGLGWDGDNPFGEGKLGEALLTPTRLYVKQSLAAVRAGGVNALAHITGGGLTENLPRVLPDDLGADIDLGAWELPGVFKWMAQTGGIEESEMLKTFNCGIGMILVVKADRADALTEVLEGEGETVARLGTVTRGEGIRYTGALL.

Belongs to the AIR synthase family.

It is found in the cytoplasm. It catalyses the reaction 2-formamido-N(1)-(5-O-phospho-beta-D-ribosyl)acetamidine + ATP = 5-amino-1-(5-phospho-beta-D-ribosyl)imidazole + ADP + phosphate + H(+). It participates in purine metabolism; IMP biosynthesis via de novo pathway; 5-amino-1-(5-phospho-D-ribosyl)imidazole from N(2)-formyl-N(1)-(5-phospho-D-ribosyl)glycinamide: step 2/2. In Ruegeria sp. (strain TM1040) (Silicibacter sp.), this protein is Phosphoribosylformylglycinamidine cyclo-ligase.